The following is a 726-amino-acid chain: MSEETVPEAASPPPPQGQPYFDRFSEDDPEYMRLRNRAADLRQDFNLMEQKKRVTMILQSPSFREELEGLIQEQMKKGNNSSNIWALRQIADFMASTSHAVFPTSSMNVSMMTPINDLHTADSLNLAKGERLMRCKISSVYRLLDLYGWAQLSDTYVTLRVSKEQDHFLISPKGVSCSEVTASSLIKVNILGEVVEKGSSCFPVDTTGFCLHSAIYAARPDVRCIIHLHTPATAAVSAMKWGLLPVSHNALLVGDMAYYDFNGEMEQEADRINLQKCLGPTCKILVLRNHGVVALGDTVEEAFYKIFHLQAACEIQVSALSSAGGVENLILLEQEKHRPHEVGSVQWAGSTFGPMQKSRLGEHEFEALMRMLDNLGYRTGYTYRHPFVQEKTKHKSEVEIPATVTAFVFEEDGAPVPALRQHAQKQQKEKTRWLNTPNTYLRVNVADEVQRSMGSPRPKTTWMKADEVEKSSSGMPIRIENPNQFVPLYTDPQEVLEMRNKIREQNRQDVKSAGPQSQLLASVIAEKSRSPSTESQLMSKGDEDTKDDSEETVPNPFSQLTDQELEEYKKEVERKKLELDGEKETAPEEPGSPAKSAPASPVQSPAKEAETKSPLVSPSKSLEEGTKKTETSKAATTEPETTQPEGVVVNGREEEQTAEEILSKGLSQMTTSADTDVDTSKDKTESVTSGPMSPEGSPSKSPSKKKKKFRTPSFLKKSKKKEKVES.

Residues 1 to 25 form a disordered region; the sequence is MSEETVPEAASPPPPQGQPYFDRFS. Phosphoserine occurs at positions 11 and 25. Residue Thr-55 is modified to Phosphothreonine; by PKA. 2 positions are modified to phosphoserine: Ser-60 and Ser-344. The interaction with calmodulin stretch occupies residues 425-444; that stretch reads KQQKEKTRWLNTPNTYLRVN. The interval 525–726 is disordered; the sequence is AEKSRSPSTE…KSKKKEKVES (202 aa). Ser-530 and Ser-532 each carry phosphoserine. A Phosphothreonine modification is found at Thr-533. Ser-535 bears the Phosphoserine mark. Residues 566 to 586 show a composition bias toward basic and acidic residues; it reads EEYKKEVERKKLELDGEKETA. A compositionally biased stretch (low complexity) spans 588–606; it reads EEPGSPAKSAPASPVQSPA. 4 positions are modified to phosphoserine: Ser-592, Ser-596, Ser-600, and Ser-604. Thr-611 bears the Phosphothreonine mark. A phosphoserine mark is found at Ser-613, Ser-617, Ser-619, and Ser-621. Basic and acidic residues predominate over residues 621–631; the sequence is SLEEGTKKTET. Positions 632 to 645 are enriched in low complexity; it reads SKAATTEPETTQPE. The span at 665–674 shows a compositional bias: polar residues; that stretch reads GLSQMTTSAD. Thr-675 carries the post-translational modification Phosphothreonine. A phosphoserine mark is found at Ser-686, Ser-689, Ser-693, Ser-697, Ser-699, and Ser-701. Positions 689–701 are enriched in low complexity; that stretch reads SGPMSPEGSPSKS. Basic residues predominate over residues 702–726; sequence PSKKKKKFRTPSFLKKSKKKEKVES. The residue at position 703 (Ser-703) is a Phosphoserine; by PKC. Residues 704–721 form an interaction with calmodulin region; the sequence is KKKKKFRTPSFLKKSKKK. Residue Ser-713 is modified to Phosphoserine; by PKA and PKC.

The protein belongs to the aldolase class II family. Adducin subfamily. Heterodimer of an alpha and a beta subunit. Found in a complex with ADD2, DMTN and SLC2A1. Interacts with SLC2A1. In terms of processing, the N-terminus is blocked. As to expression, expressed mainly in brain, spleen, kidney cortex and medulla, and heart. Also expressed in human umbilical vein endothelial cells, human vascular smooth muscle cells, kidney tubular cells and K-562 cell line.

It localises to the cytoplasm. The protein localises to the cytoskeleton. It is found in the cell membrane. In terms of biological role, membrane-cytoskeleton-associated protein that promotes the assembly of the spectrin-actin network. Binds to the erythrocyte membrane receptor SLC2A1/GLUT1 and may therefore provide a link between the spectrin cytoskeleton to the plasma membrane. Binds to calmodulin. Calmodulin binds preferentially to the beta subunit. This is Beta-adducin (ADD2) from Homo sapiens (Human).